The primary structure comprises 121 residues: Large ribosomal subunit protein bL20 (121 aa).

The protein belongs to the bacterial ribosomal protein bL20 family.

Functionally, binds directly to 23S ribosomal RNA and is necessary for the in vitro assembly process of the 50S ribosomal subunit. It is not involved in the protein synthesizing functions of that subunit. This chain is Large ribosomal subunit protein bL20, found in Chlamydia felis (strain Fe/C-56) (Chlamydophila felis).